Consider the following 117-residue polypeptide: Membrane-anchored ubiquitin-fold protein 1 (117 aa).

A Ubiquitin-like domain is found at 8–74; it reads LEIKFRLTDG…LENSKTVKDY (67 aa). C112 is lipidated: S-palmitoyl cysteine. Position 114 is a cysteine methyl ester (C114). A lipid anchor (S-farnesyl cysteine) is attached at C114. Residues 115–117 constitute a propeptide, removed in mature form; sequence SVM.

The protein localises to the cell membrane. Functionally, may serve as docking site to facilitate the association of other proteins to the plasma membrane. In Arabidopsis thaliana (Mouse-ear cress), this protein is Membrane-anchored ubiquitin-fold protein 1 (MUB1).